Reading from the N-terminus, the 50-residue chain is Basic phospholipase A2 Bmaj-9 (50 aa).

3 residues coordinate Ca(2+): Tyr-27, Gly-29, and Gly-31. Cys-28 and Cys-45 are oxidised to a cystine. His-48 is a catalytic residue. Position 49 (Asp-49) interacts with Ca(2+).

This sequence belongs to the phospholipase A2 family. Group II subfamily. D49 sub-subfamily. The cofactor is Ca(2+). In terms of tissue distribution, expressed by the venom gland.

Its subcellular location is the secreted. The enzyme catalyses a 1,2-diacyl-sn-glycero-3-phosphocholine + H2O = a 1-acyl-sn-glycero-3-phosphocholine + a fatty acid + H(+). Snake venom phospholipase A2 (PLA2) that causes irreversible neuromuscular blockade in chick biventer cervicis muscle preparations. The neuromuscular blockade is mediated by inhibitory action at the presynaptic motor nerve endings. PLA2 catalyzes the calcium-dependent hydrolysis of the 2-acyl groups in 3-sn-phosphoglycerides. In Bothrops marajoensis (Marajo lancehead), this protein is Basic phospholipase A2 Bmaj-9.